A 265-amino-acid chain; its full sequence is Mlc titration factor A (265 aa).

Zn(2+) is bound by residues H111, H148, H152, and E211.

It belongs to the MtfA family. In terms of assembly, interacts with Mlc. The cofactor is Zn(2+).

The protein localises to the cytoplasm. Involved in the modulation of the activity of the glucose-phosphotransferase system (glucose-PTS). Interacts with the transcriptional repressor Mlc, preventing its interaction with DNA and leading to the modulation of expression of genes regulated by Mlc, including ptsG, which encodes the PTS system glucose-specific EIICB component. In terms of biological role, shows zinc-dependent metallopeptidase activity. The chain is Mlc titration factor A from Escherichia fergusonii (strain ATCC 35469 / DSM 13698 / CCUG 18766 / IAM 14443 / JCM 21226 / LMG 7866 / NBRC 102419 / NCTC 12128 / CDC 0568-73).